The chain runs to 397 residues: UDP-GlcNAc:betaGal beta-1,3-N-acetylglucosaminyltransferase 7 (397 aa).

Over 1 to 6 the chain is Cytoplasmic; that stretch reads MSLWKK. A helical; Signal-anchor for type II membrane protein transmembrane segment spans residues 7–26; that stretch reads TLYKSVCLALALLVAVTVFQ. The Lumenal portion of the chain corresponds to 27-397; the sequence is RSVTPGQFLQ…LTCSLKFQVL (371 aa). N-linked (GlcNAc...) asparagine glycans are attached at residues Asn84, Asn90, Asn210, and Asn387.

Belongs to the glycosyltransferase 31 family.

The protein localises to the golgi apparatus membrane. It functions in the pathway protein modification; protein glycosylation. N-acetyl glucosamine (GlcNAc) transferase that catalyzes the transfer of GlcNAc via a beta1-&gt;3 linkage from UDP-GlcNAc to the non-reducing terminal galactose (Gal) in the linearly growing chain of N- and O-linked keratan sulfate proteoglycans. Cooperates with B4GALT4 galactosyltransferase and CHST6 and CHST1 sulfotransferases to construct and elongate mono- and disulfated disaccharide units [-&gt;3Galbeta1-&gt;4(6-sulfoGlcNAcbeta)1-&gt;] and [-&gt;3(6-sulfoGalbeta)1-&gt;4(6-sulfoGlcNAcbeta)1-&gt;] within keratan sulfate polymer. Involved in biosynthesis of N-linked keratan sulfate proteoglycans in cornea, with an impact on proteoglycan fibril organization and corneal transparency. May play a role in the maintenance of tissue architecture by suppressing cellular motility and invasion. This Rattus norvegicus (Rat) protein is UDP-GlcNAc:betaGal beta-1,3-N-acetylglucosaminyltransferase 7 (B3gnt7).